We begin with the raw amino-acid sequence, 227 residues long: Translation initiation factor 6 (227 aa).

The protein belongs to the eIF-6 family.

In terms of biological role, binds to the 50S ribosomal subunit and prevents its association with the 30S ribosomal subunit to form the 70S initiation complex. In Pyrococcus abyssi (strain GE5 / Orsay), this protein is Translation initiation factor 6.